A 426-amino-acid polypeptide reads, in one-letter code: Serine--tRNA ligase (426 aa).

233 to 235 is an L-serine binding site; it reads TSE. 264 to 266 contacts ATP; that stretch reads RSE. Residue Glu-287 coordinates L-serine. Position 351–354 (351–354) interacts with ATP; the sequence is EISS. Ser-387 provides a ligand contact to L-serine.

This sequence belongs to the class-II aminoacyl-tRNA synthetase family. Type-1 seryl-tRNA synthetase subfamily. In terms of assembly, homodimer. The tRNA molecule binds across the dimer.

Its subcellular location is the cytoplasm. It carries out the reaction tRNA(Ser) + L-serine + ATP = L-seryl-tRNA(Ser) + AMP + diphosphate + H(+). The enzyme catalyses tRNA(Sec) + L-serine + ATP = L-seryl-tRNA(Sec) + AMP + diphosphate + H(+). It functions in the pathway aminoacyl-tRNA biosynthesis; selenocysteinyl-tRNA(Sec) biosynthesis; L-seryl-tRNA(Sec) from L-serine and tRNA(Sec): step 1/1. Functionally, catalyzes the attachment of serine to tRNA(Ser). Is also able to aminoacylate tRNA(Sec) with serine, to form the misacylated tRNA L-seryl-tRNA(Sec), which will be further converted into selenocysteinyl-tRNA(Sec). The protein is Serine--tRNA ligase of Xylella fastidiosa (strain M23).